The sequence spans 253 residues: HTH-type transcriptional regulator AdiY (253 aa).

The region spanning 149–246 (DSVYQIIESD…GMTPLHYVSQ (98 aa)) is the HTH araC/xylS-type domain. DNA-binding regions (H-T-H motif) lie at residues 166–187 (SMVA…KSEN) and 213–236 (ISQV…KDFY).

The protein is HTH-type transcriptional regulator AdiY (adiY) of Escherichia coli (strain K12).